We begin with the raw amino-acid sequence, 188 residues long: Der GTPase-activating protein YihI (188 aa).

2 disordered regions span residues Met-1–Pro-80 and Asp-162–Phe-188. Positions Thr-27 to Asp-37 are enriched in basic and acidic residues. Polar residues predominate over residues Asn-47–Gly-57.

This sequence belongs to the YihI family. As to quaternary structure, interacts with Der.

Its function is as follows. A GTPase-activating protein (GAP) that modifies Der/EngA GTPase function. May play a role in ribosome biogenesis. This chain is Der GTPase-activating protein YihI, found in Yersinia pseudotuberculosis serotype O:3 (strain YPIII).